A 74-amino-acid polypeptide reads, in one-letter code: Anaphase-promoting complex subunit 13 (74 aa).

Positions 33–53 (LNELPDPEQDNGGTTESVKEQ) are disordered.

The protein belongs to the APC13 family. In terms of assembly, the mammalian APC/C is composed at least of 14 distinct subunits ANAPC1, ANAPC2, CDC27/APC3, ANAPC4, ANAPC5, CDC16/APC6, ANAPC7, CDC23/APC8, ANAPC10, ANAPC11, CDC26/APC12, ANAPC13, ANAPC15 and ANAPC16 that assemble into a complex of at least 19 chains with a combined molecular mass of around 1.2 MDa; APC/C interacts with FZR1 and FBXO5.

Its subcellular location is the nucleus. It functions in the pathway protein modification; protein ubiquitination. Component of the anaphase promoting complex/cyclosome (APC/C), a cell cycle-regulated E3 ubiquitin ligase that controls progression through mitosis and the G1 phase of the cell cycle. The APC/C complex acts by mediating ubiquitination and subsequent degradation of target proteins: it mainly mediates the formation of 'Lys-11'-linked polyubiquitin chains and, to a lower extent, the formation of 'Lys-48'- and 'Lys-63'-linked polyubiquitin chains. The APC/C complex catalyzes assembly of branched 'Lys-11'-/'Lys-48'-linked branched ubiquitin chains on target proteins. In Pongo abelii (Sumatran orangutan), this protein is Anaphase-promoting complex subunit 13 (ANAPC13).